The primary structure comprises 300 residues: Cytochrome b (300 aa).

Transmembrane regions (helical) follow at residues 28–48 (YGFL…LLAL), 72–94 (WCFR…LHIL), 107–127 (SWIS…YGYV), 168–187 (FFVF…FGIL), 223–243 (IPNK…LFLL), and 279–299 (IGCQ…YIIL). Heme b contacts are provided by His78 and His92.

It belongs to the cytochrome b family. The main subunits of complex b-c1 are: cytochrome b, cytochrome c1 and the Rieske protein. It depends on heme b as a cofactor.

The protein localises to the mitochondrion inner membrane. Functionally, component of the ubiquinol-cytochrome c reductase complex (complex III or cytochrome b-c1 complex) that is part of the mitochondrial respiratory chain. The b-c1 complex mediates electron transfer from ubiquinol to cytochrome c. Contributes to the generation of a proton gradient across the mitochondrial membrane that is then used for ATP synthesis. The chain is Cytochrome b (MT-CYB) from Plasmodium gallinaceum.